The primary structure comprises 279 residues: Probable thymidylate synthase (279 aa).

DUMP contacts are provided by residues arginine 21 and 136–137; that span reads RR. Cysteine 156 functions as the Nucleophile in the catalytic mechanism. DUMP contacts are provided by residues 177–180, asparagine 188, and 218–220; these read RSVD and HIY. Aspartate 180 provides a ligand contact to (6R)-5,10-methylene-5,6,7,8-tetrahydrofolate.

This sequence belongs to the thymidylate synthase family.

It carries out the reaction dUMP + (6R)-5,10-methylene-5,6,7,8-tetrahydrofolate = 7,8-dihydrofolate + dTMP. Its function is as follows. Sythesizes the thymine necessary for the viral DNA replication. The polypeptide is Probable thymidylate synthase (Escherichia coli (Enterobacteria phage T5)).